Consider the following 407-residue polypeptide: Monooxygenase 2 (407 aa).

The protein belongs to the 3-hydroxybenzoate 6-hydroxylase family. As to quaternary structure, monomer. FAD is required as a cofactor. Expressed in seeds, seedlings, roots, leaves, flowers, pollen and siliques.

This is Monooxygenase 2 from Arabidopsis thaliana (Mouse-ear cress).